A 263-amino-acid polypeptide reads, in one-letter code: Acetylglutamate kinase (263 aa).

Substrate contacts are provided by residues 48 to 49 (GG), Arg-70, and Asn-162.

This sequence belongs to the acetylglutamate kinase family. ArgB subfamily.

The protein localises to the cytoplasm. The catalysed reaction is N-acetyl-L-glutamate + ATP = N-acetyl-L-glutamyl 5-phosphate + ADP. It participates in amino-acid biosynthesis; L-arginine biosynthesis; N(2)-acetyl-L-ornithine from L-glutamate: step 2/4. Functionally, catalyzes the ATP-dependent phosphorylation of N-acetyl-L-glutamate. This Vibrio vulnificus (strain CMCP6) protein is Acetylglutamate kinase.